We begin with the raw amino-acid sequence, 1396 residues long: MFREGSRDDAALVKEGLFDKLEIGIASDVTIRDKWSCGEIKKPETINYRTFKPEKGGLFCEKIFGPTKDWECYCGKYKKIKHKGIVCDRCGVEVTLSKVRRERMAHIELAVPIVHIWFFKTTPSRIGNVLGMTASDLERVIYYEEYVVIDPGNTDLVKKQLLNDAKYREVVEKWGKDAFVAKMGGEAVYDLLKSEDLESLLGELKDRLRKTKSQQARMKLAKRLKIVEGFVSSSNRPEWMVLKNIPVVPPDLRPLVPLDGGRFATSDLNDLYRRVINRNNRLKAILRLKTPEVIVRNEKRMLQEAVDALFDNGRHGHPVMGAGNRPLKSLSEMLKGKNGRFRQNLLGKRVDYSGRSVIIVGPELKFNQCGLPKEMALELFEPFIIKRLKDQGSVYTIRSAKKMIQRGAPEVWDVLEEIIKGHPVLLNRAPTLHRLGIQAFEPVLIEGKAIRVHPLVCAAFNADFDGDQMAVHVPLSIEAQLEAKVLMMAPDNIFLPSSGKPVATPSKDMTLGIYYLMADPTYFPEEHGGKTKAFKDEVEVLRALNAGGFILKDEICGSRRDETGRGIHIHEKIKVRIDGQIIETTPGRVFFNTIVPKELGFQNYSMPSKRISELILQCYKKVGLEATVRFLDDLKELGFVQSTKAAISMGLKDVKIPEIKKEILKDAYDKVAIVKKQYEDGIITDGERHSKTISIWTEVSDLLSNALYSEIKKQTNSKHNPLFLMVDSGARGNKSQLKQLGALRGLMAKPNGAIIESPITSNFREGLTVLEYSISSHGARKGLADTALKTADSGYLTRRLVDVAQDVIITERDCGTLNHIEVSTIRQGSEELLPLKDRVYGRTVSENIYQPGDKSNVLAYAGDVLTSAQAEAIDDAGIESVKIRSTLTCESRRGVCAKCYGLNLANGHLIGLGEAVGIIAAQSIGEPGTQLTMRTFHLGGVAATSSTPEIVAECDGILVYLDLRVVVDQEGNNLVLNKMGALHLVQDEGRSLSEYKKLLSTKSIESLATFPVELGAKILVNDGAAVTAGQRIAEVELHNIPIICDKPGFVHYEDLVEGVSTEKVANKNTGLVELIVKQHRGELHPQIAIYADANMKELVGTYAIPSGAIISVEEGQRIAPGMLLARLPRGAIKTKDITGGLPRVAELVEARKPEDAADIAKIDGVVDFKGIQKNKRILVVRDEITGMEEEHLISLTKHLIVQRGDSVIKGQQLTDGLVVPHEILAICGVRELQKYLVNEVQEVYRLQGVDINDKHIEIIVRQMLQKVRITDPGDTTLLFGEDVDKKEFYEENRRTEEDGGKPAQAVPVLLGITKASLGTESFISAASFQDTTRVLTDAACSSKTDYLLGFKENVIMGHMIPGGTGFDTHKRIKQHLEKEQEDLVFDFDSEFESVAG.

Zn(2+) is bound by residues Cys-72, Cys-74, Cys-87, and Cys-90. Mg(2+) contacts are provided by Asp-463, Asp-465, and Asp-467. Residues Cys-814, Cys-889, Cys-896, and Cys-899 each contribute to the Zn(2+) site.

The protein belongs to the RNA polymerase beta' chain family. The RNAP catalytic core consists of 2 alpha, 1 beta, 1 beta' and 1 omega subunit. When a sigma factor is associated with the core the holoenzyme is formed, which can initiate transcription. It depends on Mg(2+) as a cofactor. Zn(2+) is required as a cofactor.

It carries out the reaction RNA(n) + a ribonucleoside 5'-triphosphate = RNA(n+1) + diphosphate. In terms of biological role, DNA-dependent RNA polymerase catalyzes the transcription of DNA into RNA using the four ribonucleoside triphosphates as substrates. The chain is DNA-directed RNA polymerase subunit beta' from Chlamydia trachomatis serovar L2 (strain ATCC VR-902B / DSM 19102 / 434/Bu).